A 458-amino-acid polypeptide reads, in one-letter code: Photosystem II CP43 reaction center protein (458 aa).

The next 5 membrane-spanning stretches (helical) occupy residues 54–78 (LFEVAHFTPEKPLYEQGDILLPHLA), 119–140 (LRGPETLEQYSDFFSQDWKDKN), 163–185 (KAMFFGGLYDPWVPGGGGVRVIT), 240–260 (RPFNWARRSLVWSGEAYLSYS), and 276–297 (WFNNTVYPSEFYGPTGSEASQA). A [CaMn4O5] cluster-binding site is contributed by glutamate 352. The helical transmembrane segment at 432-456 (RARAAAAGFEKGIDRKTEPVLSMSD) threads the bilayer.

The protein belongs to the PsbB/PsbC family. PsbC subfamily. PSII is composed of 1 copy each of membrane proteins PsbA, PsbB, PsbC, PsbD, PsbE, PsbF, PsbH, PsbI, PsbJ, PsbK, PsbL, PsbM, PsbT, PsbX, PsbY, PsbZ, Psb30/Ycf12, peripheral proteins PsbO, CyanoQ (PsbQ), PsbU, PsbV and a large number of cofactors. It forms dimeric complexes. Binds multiple chlorophylls and provides some of the ligands for the Ca-4Mn-5O cluster of the oxygen-evolving complex. It may also provide a ligand for a Cl- that is required for oxygen evolution. PSII binds additional chlorophylls, carotenoids and specific lipids. is required as a cofactor.

The protein localises to the cellular thylakoid membrane. Functionally, one of the components of the core complex of photosystem II (PSII). It binds chlorophyll and helps catalyze the primary light-induced photochemical processes of PSII. PSII is a light-driven water:plastoquinone oxidoreductase, using light energy to abstract electrons from H(2)O, generating O(2) and a proton gradient subsequently used for ATP formation. This chain is Photosystem II CP43 reaction center protein, found in Prochlorothrix hollandica.